We begin with the raw amino-acid sequence, 904 residues long: Envelope glycoprotein B (904 aa).

The first 22 residues, 1 to 22, serve as a signal peptide directing secretion; sequence MRGGGLICALVVGALVAAVASA. Residues 23–771 are Virion surface-facing; it reads APAAPAAPRA…SGVSSFMSNP (749 aa). Positions 40-83 are disordered; that stretch reads VAANGGPASRPPPVPSPATTKARKRKTKKPPKRPEATPPPDANA. A compositionally biased stretch (basic residues) spans 60 to 70; sequence KARKRKTKKPP. Asparagine 82 and asparagine 136 each carry an N-linked (GlcNAc...) asparagine; by host glycan. Cystine bridges form between cysteine 111–cysteine 570, cysteine 128–cysteine 526, cysteine 202–cysteine 266, cysteine 359–cysteine 407, and cysteine 593–cysteine 630. Involved in fusion and/or binding to host membrane stretches follow at residues 168-174 and 253-260; these read VWFGHRY and RVEAFHRY. N-linked (GlcNAc...) asparagine; by host glycans are attached at residues asparagine 393, asparagine 425, and asparagine 486. The disordered stretch occupies residues 467-490; that stretch reads QDRKPRNATPAPLREAPSANASVE. The N-linked (GlcNAc...) asparagine; by host glycan is linked to asparagine 671. Hydrophobic membrane proximal region regions lie at residues 716 to 769 and 728 to 768; these read IDTV…SFMS and MFAG…SSFM. A helical transmembrane segment spans residues 772–792; sequence FGALAVGLLVLAGLVAAFFAF. Topologically, residues 793-904 are intravirion; it reads RYVLQLQRNP…EDEAGDEDEL (112 aa). A disordered region spans residues 816–835; it reads TSDPGGVGGEGEEGAEGGGF. A Golgi targeting motif is present at residues 849–852; it reads YMAL. Positions 883 to 904 are disordered; the sequence is KRNKARYSPLHNEDEAGDEDEL. The Internalization motif motif lies at 889-892; it reads YSPL.

Belongs to the herpesviridae glycoprotein B family. As to quaternary structure, homotrimer; disulfide-linked. Binds to heparan sulfate proteoglycans. Interacts with gH/gL heterodimer.

Its subcellular location is the virion membrane. The protein resides in the host cell membrane. It is found in the host endosome membrane. It localises to the host Golgi apparatus membrane. In terms of biological role, envelope glycoprotein that forms spikes at the surface of virion envelope. Essential for the initial attachment to heparan sulfate moieties of the host cell surface proteoglycans. Involved in fusion of viral and cellular membranes leading to virus entry into the host cell. Following initial binding to its host receptors, membrane fusion is mediated by the fusion machinery composed at least of gB and the heterodimer gH/gL. May be involved in the fusion between the virion envelope and the outer nuclear membrane during virion egress. This Homo sapiens (Human) protein is Envelope glycoprotein B.